A 457-amino-acid polypeptide reads, in one-letter code: Solute carrier family 38 member 6 (457 aa).

M1 carries the post-translational modification N-acetylmethionine. Phosphoserine occurs at positions 4 and 7. Helical transmembrane passes span 48-68 (FGLS…LGLA), 70-90 (VMAN…ALLA), 112-132 (LGLF…IIIQ), 171-191 (LLII…KIGF), and 192-212 (LGYT…VVVI). C219 and C239 are joined by a disulfide. 6 consecutive transmembrane segments (helical) span residues 251–271 (VYAI…LPIY), 289–309 (AIAL…LTFY), 328–348 (VIVM…APLI), 372–392 (SLTT…VPDI), 395–415 (VFGV…PGLF), and 432–452 (ALFL…LIIF).

Belongs to the amino acid/polyamine transporter 2 family. Expressed exclusively in neurons and not in astrocytes and glia cells. Highly expressed in the synapse. Highly expressed in glutamatergic neurons. Primarily expressed in excitatory neurons, with some minor expression in inhibitory neurons.

The protein localises to the cell membrane. The protein resides in the synapse. The catalysed reaction is L-glutamine(out) = L-glutamine(in). It carries out the reaction L-glutamate(out) = L-glutamate(in). Amino acid transporter with an apparent selectivity for L-glutamine and L-glutamate. May facilitate glutamine uptake in excitatory neurons. The transport mechanism remains to be elucidated. The chain is Solute carrier family 38 member 6 from Mus musculus (Mouse).